A 290-amino-acid polypeptide reads, in one-letter code: Ribonuclease 3 (290 aa).

Residues 20–145 (YSCFYRILGF…FIGAIYLDRG (126 aa)) form the RNase III domain. Glu-62 provides a ligand contact to Mg(2+). Asp-66 is an active-site residue. Positions 131 and 134 each coordinate Mg(2+). The active site involves Glu-134. The 70-residue stretch at 173 to 242 (NFKSKLIEWS…AQMTLKKIKG (70 aa)) folds into the DRBM domain. The disordered stretch occupies residues 254–290 (KTQNNVPAEDTTPESEMSLTAENQQIDEIISTEEISV). The span at 267–279 (ESEMSLTAENQQI) shows a compositional bias: polar residues.

Belongs to the ribonuclease III family. Homodimer. Mg(2+) is required as a cofactor.

It is found in the cytoplasm. The catalysed reaction is Endonucleolytic cleavage to 5'-phosphomonoester.. Digests double-stranded RNA. Involved in the processing of primary rRNA transcript to yield the immediate precursors to the large and small rRNAs (23S and 16S). Processes some mRNAs, and tRNAs when they are encoded in the rRNA operon. Processes pre-crRNA and tracrRNA of type II CRISPR loci if present in the organism. This Bacteroides fragilis (strain YCH46) protein is Ribonuclease 3.